Reading from the N-terminus, the 532-residue chain is Probable G-protein coupled receptor Mth-like 11 (532 aa).

Residues 1-20 (MGMFRVEYLLLGILVIGVRS) form the signal peptide. The Extracellular portion of the chain corresponds to 21–229 (RDIPNCDFFD…VRKSRLSNAS (209 aa)). 5 cysteine pairs are disulfide-bonded: C26–C80, C82–C87, C91–C184, C92–C103, and C145–C204. The N-linked (GlcNAc...) asparagine glycan is linked to N42. Residues N110, N123, N166, N195, and N227 are each glycosylated (N-linked (GlcNAc...) asparagine). A helical transmembrane segment spans residues 230–250 (IPVKFSSVFFMVITIAAYLWL). Residues 251-262 (PKFRSLHGKCCN) lie on the Cytoplasmic side of the membrane. A helical transmembrane segment spans residues 263-283 (LYFICLAITFLLNVISLFGIF). Topologically, residues 284–290 (ELKTPIC) are extracellular. Residues 291–311 (YLTGYAGYFTVMATFLWLSVI) form a helical membrane-spanning segment. Over 312 to 339 (SFDVWRRFAMRKFQVFYKNKRSSFFNYN) the chain is Cytoplasmic. The helical transmembrane segment at 340-360 (IIVWSSAGLLTCIIFLVDQFV) threads the bilayer. Residues 361–386 (ETNLDNPYNPAVGVFSCWIFTNGWSA) are Extracellular-facing. The chain crosses the membrane as a helical span at residues 387-407 (TFYFYAPLAILIILNCASFFL). Residues 408–439 (TTRYIYVENKQNQKVLNNSEPQKLSRNHANYR) lie on the Cytoplasmic side of the membrane. A helical membrane pass occupies residues 440 to 460 (IYFRLFIIMGGSWFLEIIAFI). Residues 461–469 (CEMENMWKP) lie on the Extracellular side of the membrane. A helical transmembrane segment spans residues 470–490 (LIILNDYINCSQGIIIFVATF). The Cytoplasmic segment spans residues 491 to 532 (CNHEMFRLIRKRIQNRNITSLELTNTSRPVESEKMADVELGK).

The protein belongs to the G-protein coupled receptor 2 family. Mth subfamily.

It localises to the cell membrane. This chain is Probable G-protein coupled receptor Mth-like 11 (mthl11), found in Drosophila melanogaster (Fruit fly).